The following is a 508-amino-acid chain: Flagellin (508 aa).

This sequence belongs to the bacterial flagellin family.

The protein localises to the secreted. It localises to the bacterial flagellum. In terms of biological role, flagellin is the subunit protein which polymerizes to form the filaments of bacterial flagella. The sequence is that of Flagellin (fliC) from Salmonella oranienberg.